Here is a 382-residue protein sequence, read N- to C-terminus: UDP-4-amino-4-deoxy-L-arabinose--oxoglutarate aminotransferase (382 aa).

N6-(pyridoxal phosphate)lysine is present on lysine 182.

The protein belongs to the DegT/DnrJ/EryC1 family. ArnB subfamily. As to quaternary structure, homodimer. The cofactor is pyridoxal 5'-phosphate.

It carries out the reaction UDP-4-amino-4-deoxy-beta-L-arabinose + 2-oxoglutarate = UDP-beta-L-threo-pentopyranos-4-ulose + L-glutamate. It participates in nucleotide-sugar biosynthesis; UDP-4-deoxy-4-formamido-beta-L-arabinose biosynthesis; UDP-4-deoxy-4-formamido-beta-L-arabinose from UDP-alpha-D-glucuronate: step 2/3. The protein operates within bacterial outer membrane biogenesis; lipopolysaccharide biosynthesis. In terms of biological role, catalyzes the conversion of UDP-4-keto-arabinose (UDP-Ara4O) to UDP-4-amino-4-deoxy-L-arabinose (UDP-L-Ara4N). The modified arabinose is attached to lipid A and is required for resistance to polymyxin and cationic antimicrobial peptides. This is UDP-4-amino-4-deoxy-L-arabinose--oxoglutarate aminotransferase from Pectobacterium atrosepticum (strain SCRI 1043 / ATCC BAA-672) (Erwinia carotovora subsp. atroseptica).